The sequence spans 353 residues: uncharacterized protein (353 aa).

Residues 267–287 (GLPLVVIEAMAFGLPIVAFNC) form a helical membrane-spanning segment.

The protein belongs to the glycosyltransferase group 1 family. Glycosyltransferase 4 subfamily.

It is found in the membrane. This is an uncharacterized protein from Haemophilus influenzae (strain ATCC 51907 / DSM 11121 / KW20 / Rd).